The primary structure comprises 529 residues: Beta-hexosaminidase subunit alpha (529 aa).

A signal peptide spans 1 to 22; the sequence is MTSSRLWFSLLLAAAFAGRATA. Residues 23–88 constitute a propeptide that is removed on maturation; sequence LWPWPQNFQT…PRPYLTGKRH (66 aa). Cysteine 58 and cysteine 104 are joined by a disulfide. N-linked (GlcNAc...) asparagine glycosylation is found at asparagine 115, asparagine 157, and asparagine 295. Residues cysteine 277 and cysteine 328 are joined by a disulfide bond. Glutamate 323 acts as the Proton donor in catalysis. A critical for hydrolysis GM2 gangliosides region spans residues 423 to 424; the sequence is NR. Cysteine 505 and cysteine 522 are oxidised to a cystine.

The protein belongs to the glycosyl hydrolase 20 family. There are 3 beta-hexosaminidase isozymes: isozyme A (hexosaminidase A) is a heterodimer composed of one subunit alpha and one subunit beta (chain A and B); isozyme B (hexosaminidase B) is a homodimer of two beta subunits (two chains A and B); isozyme S (hexosaminidase S) is a homodimer of two alpha subunits. The composition of the dimer (isozyme A versus isozyme S) has a significant effect on the substrate specificity of the alpha subunit active site. In terms of processing, N-linked glycan at Asn-115 consists of Man(3)-GlcNAc(2). N-linked glycan at Asn-157 consists of either GlcNAc or GlcNAc(2)-Man(7-9). N-linked glycan at Asn-295 consists of either GlcNAc, GlcNAc-Fuc, or GlcNAc(2)-Man(4).

It localises to the lysosome. The catalysed reaction is Hydrolysis of terminal non-reducing N-acetyl-D-hexosamine residues in N-acetyl-beta-D-hexosaminides.. It catalyses the reaction N-acetyl-beta-D-galactosaminyl-(1-&gt;4)-beta-D-3-sulfogalactosyl-(1-&gt;4)-beta-D-glucosyl-(1&lt;-&gt;1')-ceramide + H2O = a beta-D-3-sulfogalactosyl-(1-&gt;4)-beta-D-glucosyl-(1&lt;-&gt;1')-ceramide + N-acetyl-beta-D-galactosamine. It carries out the reaction a ganglioside GM2 (d18:1(4E)) + H2O = a ganglioside GM3 (d18:1(4E)) + N-acetyl-beta-D-galactosamine. The enzyme catalyses a ganglioside GM2 + H2O = a ganglioside GM3 + N-acetyl-beta-D-galactosamine. The catalysed reaction is beta-D-GalNAc-(1-&gt;4)-alpha-L-IdoA-(1-&gt;3)-beta-D-GalNAc-4-sulfate-(1-&gt;4)-alpha-L-IdoA-(1-&gt;3)-D-GalNAc-4-sulfate + H2O = alpha-L-IdoA-(1-&gt;3)-beta-D-GalNAc-4-sulfate-(1-&gt;4)-alpha-L-IdoA-(1-&gt;3)-D-GalNAc-4-sulfate + N-acetyl-D-galactosamine. It catalyses the reaction N-acetyl-beta-D-6-sulfogalactosaminyl-(1-&gt;4)-alpha-L-iduronyl-(1-&gt;3)-N-acetyl-D-6-sulfogalactosamine + H2O = alpha-L-iduronyl-(1-&gt;3)-N-acetyl-D-6-sulfogalactosamine + N-acetyl-D-6-sulfogalactosamine. With respect to regulation, addition of GM2A stimulates the hydrolysis of sulfated glycosphingolipid SM2 and the ganglioside GM2. In terms of biological role, hydrolyzes the non-reducing end N-acetyl-D-hexosamine and/or sulfated N-acetyl-D-hexosamine of glycoconjugates, such as the oligosaccharide moieties from proteins and neutral glycolipids, or from certain mucopolysaccharides. The isozyme S is as active as the isozyme A on the anionic bis-sulfated glycans, the chondroitin-6-sulfate trisaccharide (C6S-3), and the dermatan sulfate pentasaccharide, and the sulfated glycosphingolipid SM2. The isozyme B does not hydrolyze each of these substrates, however hydrolyzes efficiently neutral oligosaccharide. Only the isozyme A is responsible for the degradation of GM2 gangliosides in the presence of GM2A. This Homo sapiens (Human) protein is Beta-hexosaminidase subunit alpha.